Here is a 272-residue protein sequence, read N- to C-terminus: Zinc transporter ZupT (272 aa).

8 helical membrane-spanning segments follow: residues 11–31, 40–60, 76–96, 126–146, 158–178, 189–209, 211–231, and 250–270; these read IALA…LMVV, LLAF…LTEI, LGFT…MVID, LMTA…TFFA, AFAI…PVYF, ASLL…LALF, VLSD…MVFL, and VYGL…FRFA. Residues Asn-136 and Glu-139 each coordinate Fe(2+). Positions 139 and 164 each coordinate Zn(2+). The Fe(2+) site is built by Asn-165, Glu-168, and Glu-197. Residue Glu-168 coordinates Zn(2+).

It belongs to the ZIP transporter (TC 2.A.5) family. ZupT subfamily.

It localises to the cell inner membrane. It catalyses the reaction Zn(2+)(in) = Zn(2+)(out). In terms of biological role, mediates zinc uptake. May also transport other divalent cations. The chain is Zinc transporter ZupT from Xanthomonas axonopodis pv. citri (strain 306).